The primary structure comprises 181 residues: Large ribosomal subunit protein uL5 (181 aa).

The protein belongs to the universal ribosomal protein uL5 family. Part of the 50S ribosomal subunit; contacts the 5S rRNA and probably tRNA. Forms a bridge to the 30S subunit in the 70S ribosome.

This is one of the proteins that bind and probably mediate the attachment of the 5S RNA into the large ribosomal subunit, where it forms part of the central protuberance. In the 70S ribosome it contacts protein S13 of the 30S subunit (bridge B1b), connecting the 2 subunits; this bridge is implicated in subunit movement. May contact the P site tRNA; the 5S rRNA and some of its associated proteins might help stabilize positioning of ribosome-bound tRNAs. The polypeptide is Large ribosomal subunit protein uL5 (Methanococcus maripaludis (strain DSM 14266 / JCM 13030 / NBRC 101832 / S2 / LL)).